The primary structure comprises 218 residues: Ras-related protein Rab-27B (218 aa).

Residue threonine 2 is modified to N-acetylthreonine. 16 to 24 (GDSGVGKTT) contributes to the GTP binding site. The Effector region signature appears at 38 to 46 (FITTVGIDF). Residues 74–78 (DTAGQ), 133–136 (NKAD), and 163–165 (SAA) each bind GTP. Cysteines 123 and 188 form a disulfide. The segment at 194–218 (IPDTVNGGNSGNLDGEKPPEKKCIC) is disordered. The segment covering 207–218 (DGEKPPEKKCIC) has biased composition (basic and acidic residues). 2 S-geranylgeranyl cysteine lipidation sites follow: cysteine 216 and cysteine 218. Cysteine 218 is modified (cysteine methyl ester).

Belongs to the small GTPase superfamily. Rab family. In terms of assembly, interacts with SYTL2, SYTL4, MYRIP and MLPH. Interacts with RPH3A and RPH3A. Interacts (GDP-bound form preferentially) with DENND10. In terms of tissue distribution, expressed primarily in testis.

The protein resides in the membrane. It localises to the late endosome. The catalysed reaction is GTP + H2O = GDP + phosphate + H(+). Its activity is regulated as follows. Regulated by guanine nucleotide exchange factors (GEFs) which promote the exchange of bound GDP for free GTP, GTPase activating proteins (GAPs) which increase the GTP hydrolysis activity, and GDP dissociation inhibitors which inhibit the dissociation of the nucleotide from the GTPase. Activated by GEFs such as DENND10. Small GTPase which cycles between active GTP-bound and inactive GDP-bound states. In its active state, binds to a variety of effector proteins to regulate homeostasis of late endocytic pathway, including endosomal positioning, maturation and secretion. Plays a role in NTRK2/TRKB axonal anterograde transport by facilitating the association of NTRK2/TRKB with KLC1. May be involved in targeting uroplakins to urothelial apical membranes. The polypeptide is Ras-related protein Rab-27B (RAB27B) (Homo sapiens (Human)).